Reading from the N-terminus, the 129-residue chain is Small ribosomal subunit protein uS9 (129 aa).

The protein belongs to the universal ribosomal protein uS9 family.

This is Small ribosomal subunit protein uS9 from Helicobacter pylori (strain HPAG1).